Consider the following 176-residue polypeptide: Large ribosomal subunit protein uL6 (176 aa).

The protein belongs to the universal ribosomal protein uL6 family. As to quaternary structure, part of the 50S ribosomal subunit.

In terms of biological role, this protein binds to the 23S rRNA, and is important in its secondary structure. It is located near the subunit interface in the base of the L7/L12 stalk, and near the tRNA binding site of the peptidyltransferase center. In Thiobacillus denitrificans (strain ATCC 25259 / T1), this protein is Large ribosomal subunit protein uL6.